A 75-amino-acid polypeptide reads, in one-letter code: Cytochrome c oxidase subunit 6C (75 aa).

Residues methionine 1 to glycine 13 are Mitochondrial matrix-facing. A helical membrane pass occupies residues leucine 14–arginine 54. Residues asparagine 55 to lysine 75 are Mitochondrial intermembrane-facing.

The protein belongs to the cytochrome c oxidase subunit 6c family. As to quaternary structure, component of the cytochrome c oxidase (complex IV, CIV), a multisubunit enzyme composed of 14 subunits. The complex is composed of a catalytic core of 3 subunits MT-CO1, MT-CO2 and MT-CO3, encoded in the mitochondrial DNA, and 11 supernumerary subunits COX4I, COX5A, COX5B, COX6A, COX6B, COX6C, COX7A, COX7B, COX7C, COX8 and NDUFA4, which are encoded in the nuclear genome. The complex exists as a monomer or a dimer and forms supercomplexes (SCs) in the inner mitochondrial membrane with NADH-ubiquinone oxidoreductase (complex I, CI) and ubiquinol-cytochrome c oxidoreductase (cytochrome b-c1 complex, complex III, CIII), resulting in different assemblies (supercomplex SCI(1)III(2)IV(1) and megacomplex MCI(2)III(2)IV(2)).

Its subcellular location is the mitochondrion inner membrane. It participates in energy metabolism; oxidative phosphorylation. Functionally, component of the cytochrome c oxidase, the last enzyme in the mitochondrial electron transport chain which drives oxidative phosphorylation. The respiratory chain contains 3 multisubunit complexes succinate dehydrogenase (complex II, CII), ubiquinol-cytochrome c oxidoreductase (cytochrome b-c1 complex, complex III, CIII) and cytochrome c oxidase (complex IV, CIV), that cooperate to transfer electrons derived from NADH and succinate to molecular oxygen, creating an electrochemical gradient over the inner membrane that drives transmembrane transport and the ATP synthase. Cytochrome c oxidase is the component of the respiratory chain that catalyzes the reduction of oxygen to water. Electrons originating from reduced cytochrome c in the intermembrane space (IMS) are transferred via the dinuclear copper A center (CU(A)) of subunit 2 and heme A of subunit 1 to the active site in subunit 1, a binuclear center (BNC) formed by heme A3 and copper B (CU(B)). The BNC reduces molecular oxygen to 2 water molecules using 4 electrons from cytochrome c in the IMS and 4 protons from the mitochondrial matrix. The polypeptide is Cytochrome c oxidase subunit 6C (COX6C) (Macaca silenus (Lion-tailed macaque)).